The primary structure comprises 322 residues: Germ cell-specific gene 1-like protein (322 aa).

Residues 1–8 (MKTSRRGR) are Cytoplasmic-facing. Residues 9–29 (ALLAVALNLLALLFATTAFLT) traverse the membrane as a helical segment. Over 30 to 122 (TYWCQGTQRV…FIDLAPASEK (93 aa)) the chain is Extracellular. The chain crosses the membrane as a helical span at residues 123 to 143 (GVLWLSVVSEVLYILLLVVGF). The Cytoplasmic segment spans residues 144 to 163 (SLMCLELVHSSSVIDGLKLN). A helical membrane pass occupies residues 164 to 184 (AFAAVFTVLSGLLGMVAHMMY). Topologically, residues 185–207 (TQVFQVTVSLGPEDWRPHSWDYG) are extracellular. Residues 208 to 228 (WSFCLAWGSFTCCMAASVTTL) form a helical membrane-spanning segment. At 229 to 322 (NSYTKTVIEF…RQCWVLGHWV (94 aa)) the chain is on the cytoplasmic side. Ser274 bears the Phosphoserine mark.

This sequence belongs to the GSG1 family. As to quaternary structure, component of the inner core of AMPAR complexes. AMPAR complexes consist of an inner core made of 4 pore-forming GluA/GRIA proteins (GRIA1, GRIA2, GRIA3 and GRIA4) and 4 major auxiliary subunits arranged in a twofold symmetry. One of the two pairs of distinct binding sites is occupied either by CNIH2, CNIH3 or CACNG2, CACNG3. The other harbors CACNG2, CACNG3, CACNG4, CACNG8 or GSG1L. This inner core of AMPAR complexes is complemented by outer core constituents binding directly to the GluA/GRIA proteins at sites distinct from the interaction sites of the inner core constituents. Outer core constituents include at least PRRT1, PRRT2, CKAMP44/SHISA9, FRRS1L and NRN1. The proteins of the inner and outer core serve as a platform for other, more peripherally associated AMPAR constituents. Alone or in combination, these auxiliary subunits control the gating and pharmacology of the AMPAR complexes and profoundly impact their biogenesis and protein processing. In terms of tissue distribution, expressed in the brain, including hippocampus (at protein level).

It localises to the cell membrane. It is found in the synapse. Functionally, as a component of the inner core of AMPAR complexes, modifies AMPA receptor (AMPAR) gating. The protein is Germ cell-specific gene 1-like protein (Gsg1l) of Mus musculus (Mouse).